Here is a 321-residue protein sequence, read N- to C-terminus: Protein ABIL3 (321 aa).

Disordered stretches follow at residues Thr-179–Ser-273 and Glu-279–Leu-298. Low complexity-rich tracts occupy residues Ser-204–Ala-215 and Ile-240–Arg-255. The span at Glu-279 to His-288 shows a compositional bias: basic and acidic residues.

It belongs to the ABI family. Binds SCAR.

The protein resides in the cytoplasm. The protein localises to the cytoskeleton. Functionally, involved in regulation of actin and microtubule organization. Part of a WAVE complex that activates the Arp2/3 complex. The chain is Protein ABIL3 (ABIL3) from Arabidopsis thaliana (Mouse-ear cress).